We begin with the raw amino-acid sequence, 124 residues long: Large ribosomal subunit protein bL19 (124 aa).

This sequence belongs to the bacterial ribosomal protein bL19 family.

Its function is as follows. This protein is located at the 30S-50S ribosomal subunit interface and may play a role in the structure and function of the aminoacyl-tRNA binding site. The protein is Large ribosomal subunit protein bL19 of Cereibacter sphaeroides (strain ATCC 17029 / ATH 2.4.9) (Rhodobacter sphaeroides).